The following is an 86-amino-acid chain: Large ribosomal subunit protein uL23 (86 aa).

Belongs to the universal ribosomal protein uL23 family. Part of the 50S ribosomal subunit. Contacts protein L29.

Its function is as follows. Binds to 23S rRNA. One of the proteins that surrounds the polypeptide exit tunnel on the outside of the ribosome. In Thermococcus sibiricus (strain DSM 12597 / MM 739), this protein is Large ribosomal subunit protein uL23.